Here is an 837-residue protein sequence, read N- to C-terminus: Protein translocase subunit SecA 1 (837 aa).

ATP is bound by residues Q85, 103-107 (GEGKT), and D492. The segment covering 787–806 (QEVAKGEAVHPKEDGEEPKK) has biased composition (basic and acidic residues). Residues 787–813 (QEVAKGEAVHPKEDGEEPKKKPIRKAV) are disordered. Positions 821, 823, 832, and 833 each coordinate Zn(2+).

It belongs to the SecA family. Monomer and homodimer. Part of the essential Sec protein translocation apparatus which comprises SecA, SecYEG and auxiliary proteins SecDF. Other proteins may also be involved. Zn(2+) is required as a cofactor.

The protein resides in the cell membrane. Its subcellular location is the cytoplasm. The catalysed reaction is ATP + H2O + cellular proteinSide 1 = ADP + phosphate + cellular proteinSide 2.. Its function is as follows. Part of the Sec protein translocase complex. Interacts with the SecYEG preprotein conducting channel. Has a central role in coupling the hydrolysis of ATP to the transfer of proteins into and across the cell membrane, serving as an ATP-driven molecular motor driving the stepwise translocation of polypeptide chains across the membrane. This is Protein translocase subunit SecA 1 from Geobacillus thermodenitrificans (strain NG80-2).